The chain runs to 175 residues: Protein tyrosine phosphatase PRL-1 (175 aa).

Residues 15–172 (KPSRVLFHFL…YKRRHQGAGC (158 aa)) form the Tyrosine-protein phosphatase domain. Cys53 and Cys114 are joined by a disulfide. Asp76 (proton donor) is an active-site residue. Cys114 functions as the Phosphocysteine intermediate in the catalytic mechanism. 116–120 (AGLGR) is a binding site for substrate. A Cysteine methyl ester modification is found at Cys172. Cys172 carries the S-farnesyl cysteine lipid modification. A propeptide spans 173-175 (VIM) (removed in mature form).

It belongs to the protein-tyrosine phosphatase family.

The protein resides in the cytoplasm. It is found in the mitochondrion matrix. The protein localises to the kinetoplast. It localises to the secreted. Its subcellular location is the extracellular exosome. It carries out the reaction O-phospho-L-tyrosyl-[protein] + H2O = L-tyrosyl-[protein] + phosphate. With respect to regulation, activated in a reduced environment which promotes the reduction of the disulfide bond between the regulatory Cys-53 and catalytic Cys-114 residues. Has protein tyrosine phosphatase activity and may act as a virulence factor to support intracellular survival in host macrophages. This chain is Protein tyrosine phosphatase PRL-1, found in Leishmania major.